We begin with the raw amino-acid sequence, 110 residues long: Late cornified envelope protein 2C (110 aa).

Residues 1 to 10 (MSCQQNQQQC) are compositionally biased toward low complexity. The disordered stretch occupies residues 1–23 (MSCQQNQQQCQPPPKCPPKCTPK). Pro residues predominate over residues 11–23 (QPPPKCPPKCTPK).

This sequence belongs to the LCE family. As to quaternary structure, interacts with CYSRT1; the interaction is direct. In terms of tissue distribution, skin-specific. Expression was readily detected in adult trunk skin, adult arm skin, fetal skin, penal skin, vulva, esophagus and tongue. Not expressed in the cervix, rectum, lung, colon, or placenta.

Its function is as follows. Precursors of the cornified envelope of the stratum. The polypeptide is Late cornified envelope protein 2C (LCE2C) (Homo sapiens (Human)).